Here is a 246-residue protein sequence, read N- to C-terminus: Small ribosomal subunit protein uS3 (246 aa).

A KH type-2 domain is found at I38–R106. Residues V218–R246 are disordered.

Belongs to the universal ribosomal protein uS3 family. As to quaternary structure, part of the 30S ribosomal subunit. Forms a tight complex with proteins S10 and S14.

Binds the lower part of the 30S subunit head. Binds mRNA in the 70S ribosome, positioning it for translation. This chain is Small ribosomal subunit protein uS3, found in Porphyromonas gingivalis (strain ATCC 33277 / DSM 20709 / CIP 103683 / JCM 12257 / NCTC 11834 / 2561).